We begin with the raw amino-acid sequence, 255 residues long: Aliphatic sulfonates import ATP-binding protein SsuB (255 aa).

An ABC transporter domain is found at 5-231 (IRVNEKAFGK…PRSRTSPVFQ (227 aa)). 39-46 (GPSGCGKS) lines the ATP pocket.

The protein belongs to the ABC transporter superfamily. Aliphatic sulfonates importer (TC 3.A.1.17.2) family. As to quaternary structure, the complex is composed of two ATP-binding proteins (SsuB), two transmembrane proteins (SsuC) and a solute-binding protein (SsuA).

It is found in the cell membrane. The enzyme catalyses ATP + H2O + aliphatic sulfonate-[sulfonate-binding protein]Side 1 = ADP + phosphate + aliphatic sulfonateSide 2 + [sulfonate-binding protein]Side 1.. In terms of biological role, part of the ABC transporter complex SsuABC involved in aliphatic sulfonates import. Responsible for energy coupling to the transport system. This Bacillus licheniformis (strain ATCC 14580 / DSM 13 / JCM 2505 / CCUG 7422 / NBRC 12200 / NCIMB 9375 / NCTC 10341 / NRRL NRS-1264 / Gibson 46) protein is Aliphatic sulfonates import ATP-binding protein SsuB.